Here is a 355-residue protein sequence, read N- to C-terminus: Cyanide hydratase (355 aa).

Residues 6 to 285 (YKAAAVTSEP…DGLLFVDIDL (280 aa)) form the CN hydrolase domain. The Proton acceptor role is filled by glutamate 46. Lysine 128 is an active-site residue. Catalysis depends on cysteine 163, which acts as the Nucleophile.

Belongs to the carbon-nitrogen hydrolase superfamily. Nitrilase family. In terms of assembly, oligomer of dimers, forming left-handed helical fibers.

The catalysed reaction is formamide = hydrogen cyanide + H2O. In terms of biological role, catalyzes the hydration of cyanide to formamide. Degradation of cyanide may be important for plant pathogenic fungi in infection of cyanogenic plants. The sequence is that of Cyanide hydratase from Gibberella zeae (strain ATCC MYA-4620 / CBS 123657 / FGSC 9075 / NRRL 31084 / PH-1) (Wheat head blight fungus).